Consider the following 358-residue polypeptide: Glyoxylate/succinic semialdehyde reductase 2, chloroplastic (358 aa).

The transit peptide at 1–44 directs the protein to the chloroplast; that stretch reads MPLVSLSFASSSSKAMALCSICPRIPLRFRPKPISPFLSKPQIC. Residues 70–84 and T161 contribute to the NADP(+) site; that span reads GFLGMGIMGSPMAQN. Residue K236 is part of the active site. K304 serves as a coordination point for NADP(+).

This sequence belongs to the HIBADH-related family. NP60 subfamily.

Its subcellular location is the plastid. The protein localises to the chloroplast stroma. It carries out the reaction glycolate + NADP(+) = glyoxylate + NADPH + H(+). The enzyme catalyses 4-hydroxybutanoate + NADP(+) = succinate semialdehyde + NADPH + H(+). The ratio of NADPH/NADP(+) may regulate enzymatic activity. Functionally, catalyzes the NADPH-dependent reduction of glyoxylate to glycolate as well as succinic semialdehyde (SSA) to gamma-hydroxybutyrate in vitro. May function in redox homeostasis and play a role in oxidative stress tolerance by detoxifying glyoxylate and SSA generated in glycolate metabolism and GABA metabolism, respectively. This Arabidopsis thaliana (Mouse-ear cress) protein is Glyoxylate/succinic semialdehyde reductase 2, chloroplastic (GLYR2).